Here is a 201-residue protein sequence, read N- to C-terminus: Putative ferritin heavy polypeptide-like 19 (201 aa).

Residues 1 to 123 (MAFYFDQDDA…GYLSNLHKMG (123 aa)) form the Ferritin-like diiron domain.

This sequence belongs to the ferritin family.

The polypeptide is Putative ferritin heavy polypeptide-like 19 (FTH1P19) (Homo sapiens (Human)).